Consider the following 710-residue polypeptide: Amyloid beta precursor protein binding family B member 1 (710 aa).

The segment covering 1–15 (MSVPSSLSQSAINAN) has biased composition (polar residues). Disordered regions lie at residues 1–24 (MSVP…ALSL), 131–254 (GLRG…TDSD), 276–299 (GTTQ…EESQ), and 340–365 (TFPA…NTNP). Residues 145-173 (GPDEGEEKAAGEAEEEEEDDDDEEEEEDL) are compositionally biased toward acidic residues. An N6-acetyllysine modification is found at Lys-204. The span at 223–234 (SWATLSQGSPSY) shows a compositional bias: polar residues. The WW domain maps to 253-285 (SDLPAGWMRVQDTSGTYYWHIPTGTTQWEPPGR). The segment covering 287-299 (SPSQGSSPQEESQ) has biased composition (low complexity). Residues 370–509 (FAVRSLGWVE…SKIMAERRNA (140 aa)) form the PID 1 domain. The residue at position 459 (Ser-459) is a Phosphoserine; by PKC. Ser-517 is modified (phosphoserine). A PID 2 domain is found at 542–699 (KFQVYYLGNV…RRGVQSLWGS (158 aa)). The residue at position 547 (Tyr-547) is a Phosphotyrosine; by ABL1. A Phosphoserine; by SGK1 modification is found at Ser-610. Lys-701 carries the post-translational modification N6-acetyllysine.

Component of a complex, at least composed of APBB1, RASD1/DEXRAS1 and APP. Interacts (via PID domain 2) with APP (with the intracellular domain of the amyloid-beta precursor protein). Interacts (via PID domain 2) with RASD1/DEXRAS1; impairs the transcription activation activity. Interacts (via PID domain 1) with KAT5/TIP60. Interacts (via the WW domain) with the proline-rich region of APBB1IP. Interacts with TSHZ1 and TSHZ2. Interacts (via the WW domain) with histone H2AX (when phosphorylated on 'Tyr-142') and the proline-rich region of ENAH. Interacts with MAPK8. Interacts (via PID domain 1) with TSHZ3 (via homeobox domain). Interacts with SET. Found in a trimeric complex with HDAC1 and TSHZ3; the interaction between HDAC1 and APBB1 is mediated by TSHZ3. Interacts (via WWW domain) with NEK6. Interacts (via WWW domain) with ABL1. Interacts with RNF157. Interacts with ARF6. Phosphorylation at Ser-610 by SGK1 promotes its localization to the nucleus. Phosphorylated following nuclear translocation. Phosphorylation at Tyr-547 by ABL1 enhances transcriptional activation activity and reduces the affinity for RASD1/DEXRAS1. Phosphorylated at Ser-459 by PKC upon insulin activation. In terms of processing, acetylation at Lys-204 and Lys-701 by KAT5 promotes its transcription activator activity. Post-translationally, polyubiquitination by RNF157 leads to degradation by the proteasome. As to expression, highly expressed in brain; strongly reduced in post-mortem elderly subjects with Alzheimer disease. Expressed preferentially in the brain.

It localises to the cell membrane. The protein localises to the cytoplasm. It is found in the nucleus. The protein resides in the cell projection. Its subcellular location is the growth cone. It localises to the nucleus speckle. Its function is as follows. Transcription coregulator that can have both coactivator and corepressor functions. Adapter protein that forms a transcriptionally active complex with the gamma-secretase-derived amyloid precursor protein (APP) intracellular domain. Plays a central role in the response to DNA damage by translocating to the nucleus and inducing apoptosis. May act by specifically recognizing and binding histone H2AX phosphorylated on 'Tyr-142' (H2AXY142ph) at double-strand breaks (DSBs), recruiting other pro-apoptosis factors such as MAPK8/JNK1. Required for histone H4 acetylation at double-strand breaks (DSBs). Its ability to specifically bind modified histones and chromatin modifying enzymes such as KAT5/TIP60, probably explains its transcription activation activity. Functions in association with TSHZ3, SET and HDAC factors as a transcriptional repressor, that inhibits the expression of CASP4. Associates with chromatin in a region surrounding the CASP4 transcriptional start site(s). Involved in hippocampal neurite branching and neuromuscular junction formation, as a result plays a role in spatial memory functioning. Plays a role in the maintenance of lens transparency. May play a role in muscle cell strength. Acts as a molecular adapter that functions in neurite outgrowth by activating the RAC1-ARF6 axis upon insulin treatment. This chain is Amyloid beta precursor protein binding family B member 1, found in Homo sapiens (Human).